We begin with the raw amino-acid sequence, 188 residues long: Protein ORFV073 (188 aa).

As to quaternary structure, interacts with host IKBKG; this interaction inhibits host NF-kappa-B pathway activation.

Its subcellular location is the host nucleus. The protein resides in the host cytoplasm. It localises to the host perinuclear region. It is found in the virion. In terms of biological role, plays a role in the inhibition of the host NF-kappa-B pathway early during infection. Prevents the host RELA subunit from reaching the nucleus and activate transcription. The polypeptide is Protein ORFV073 (Capra hircus (Goat)).